A 462-amino-acid polypeptide reads, in one-letter code: Cytochrome P450 20A1 (462 aa).

Residues 4–24 form a helical membrane-spanning segment; it reads FAIFAVTFLLALVGAVLYLYP. Position 409 (Cys-409) interacts with heme.

Belongs to the cytochrome P450 family. Heme serves as cofactor.

It is found in the membrane. The protein is Cytochrome P450 20A1 (CYP20A1) of Homo sapiens (Human).